The sequence spans 395 residues: Protein BTN1 (395 aa).

The signal sequence occupies residues 1–31; the sequence is MQLEPAHLVYAAFWTFGLVNNVLYVVILTAA. 10 helical membrane-spanning segments follow: residues 43-63, 74-94, 96-116, 134-154, 158-178, 222-242, 261-278, 291-311, 313-333, and 355-375; these read VVLLADVLPSFLIKLAAPFFI, LLVGLSTVGMMSVSLASPLFL, LVGVVLASFSSGLGEVTFLQL, GAGLVGSGLFMLLTTVLGVSV, LLVFAFFPLAFLGVYFYLLPP, PLVMPYMLPLFLVYFSEYTIN, FRDVYVTYGTLYQLGVFI, IMIPSVLQFANLVFCIAQSMS, ILPNVWLVFILIFYEGLLGGA, and LGSVGMSDSAGIVLAGLVSLW.

Belongs to the battenin family.

Its subcellular location is the vacuole membrane. In terms of biological role, involved in vacuolar transport and vacuole pH homeostasis. Also required for cytokinesis. The polypeptide is Protein BTN1 (BTN1) (Yarrowia lipolytica (strain CLIB 122 / E 150) (Yeast)).